Here is a 35-residue protein sequence, read N- to C-terminus: Kappa-theraphotoxin-Tb1b (35 aa).

3 cysteine pairs are disulfide-bonded: cysteine 3–cysteine 18, cysteine 10–cysteine 23, and cysteine 17–cysteine 30.

This sequence belongs to the neurotoxin 10 (Hwtx-1) family. 58 subfamily. Monomer. Expressed by the venom gland.

The protein resides in the secreted. Its function is as follows. Low-affinity blocker of Kv4.2/KCND2 voltage-gated potassium channels. Is presumed to shift the voltage-dependence of channel activation to more depolarized potentials and to bind to the S3-S4 linker region of the voltage sensor domain. In Theraphosa blondi (Goliath birdeating spider), this protein is Kappa-theraphotoxin-Tb1b.